A 546-amino-acid chain; its full sequence is Glucose-6-phosphate isomerase (546 aa).

Residue Glu353 is the Proton donor of the active site. Catalysis depends on residues His384 and Lys512.

The protein belongs to the GPI family.

Its subcellular location is the cytoplasm. It carries out the reaction alpha-D-glucose 6-phosphate = beta-D-fructose 6-phosphate. Its pathway is carbohydrate biosynthesis; gluconeogenesis. The protein operates within carbohydrate degradation; glycolysis; D-glyceraldehyde 3-phosphate and glycerone phosphate from D-glucose: step 2/4. Catalyzes the reversible isomerization of glucose-6-phosphate to fructose-6-phosphate. The protein is Glucose-6-phosphate isomerase of Methylococcus capsulatus (strain ATCC 33009 / NCIMB 11132 / Bath).